The following is a 486-amino-acid chain: NADH-quinone oxidoreductase subunit N (486 aa).

14 helical membrane passes run 8-28 (LTAL…ILSI), 36-56 (FVAV…YFLI), 74-94 (ILYI…SYPW), 104-124 (EFYL…ISHH), 125-145 (MASF…LIAY), 160-180 (IILS…VYSI), 201-221 (ILVV…KLSI), 239-259 (VLSF…LNFL), 269-289 (VIYF…NLMA), 298-318 (FLGY…LVSH), 329-349 (AIYL…VNLI), 376-396 (SVLT…GFIG), 410-432 (WLIG…RIIL), and 459-479 (IVIC…NPLI).

The protein belongs to the complex I subunit 2 family. In terms of assembly, NDH-1 is composed of 13 different subunits. Subunits NuoA, H, J, K, L, M, N constitute the membrane sector of the complex.

The protein resides in the cell membrane. It carries out the reaction a quinone + NADH + 5 H(+)(in) = a quinol + NAD(+) + 4 H(+)(out). Functionally, NDH-1 shuttles electrons from NADH, via FMN and iron-sulfur (Fe-S) centers, to quinones in the respiratory chain. The immediate electron acceptor for the enzyme in this species is believed to be ubiquinone. Couples the redox reaction to proton translocation (for every two electrons transferred, four hydrogen ions are translocated across the cytoplasmic membrane), and thus conserves the redox energy in a proton gradient. The sequence is that of NADH-quinone oxidoreductase subunit N from Buchnera aphidicola subsp. Acyrthosiphon pisum (strain APS) (Acyrthosiphon pisum symbiotic bacterium).